The chain runs to 740 residues: Homeobox protein 4 (740 aa).

The span at 1–13 shows a compositional bias: polar residues; the sequence is MNTVEENNTKITD. Disordered regions lie at residues 1 to 41 and 179 to 491; these read MNTV…ENLS and NNNN…NNEI. Composition is skewed to low complexity over residues 14–34, 179–241, 251–288, and 303–316; these read NNNN…NNKN, NNNN…PQQN, NNNN…NNNN, and STTD…SVPS. Positions 254–287 form a coiled coil; that stretch reads NINNNNINKNNNNYNNNNNNKNNNNNNNNNNNNN. Residues 317–328 are compositionally biased toward basic residues; it reads NKKKSSKTKQKS. Over residues 339–363 the composition is skewed to polar residues; sequence HKSNYHQQPNQNSQHLQSKPNSPIL. Low complexity-rich tracts occupy residues 365–390 and 397–491; these read SSPL…SPPQ and NNNF…NNEI. Residues 472–500 adopt a coiled-coil conformation; the sequence is NTNTNNNNNKNNNNNNNNEIENNNNEELI. A DNA-binding region (homeobox) is located at residues 605 to 667; sequence RPKKGAKLSK…NTRRRKVPTL (63 aa). A compositionally biased stretch (low complexity) spans 686–722; sequence NNNNNNGGNSNFKNNNNNTITTTSTSNNNNNNNNNNH. The tract at residues 686-740 is disordered; the sequence is NNNNNNGGNSNFKNNNNNTITTTSTSNNNNNNNNNNHNEMECDDGENEESSEYDD. Residues 726 to 740 are compositionally biased toward acidic residues; sequence ECDDGENEESSEYDD.

The protein localises to the nucleus. In terms of biological role, putative transcription factor. The polypeptide is Homeobox protein 4 (hbx4) (Dictyostelium discoideum (Social amoeba)).